The sequence spans 92 residues: Small ribosomal subunit protein uS19c (92 aa).

The protein belongs to the universal ribosomal protein uS19 family.

The protein localises to the plastid. It is found in the chloroplast. Functionally, protein S19 forms a complex with S13 that binds strongly to the 16S ribosomal RNA. This chain is Small ribosomal subunit protein uS19c, found in Panax ginseng (Korean ginseng).